Here is a 93-residue protein sequence, read N- to C-terminus: Small ribosomal subunit protein uS15c (93 aa).

This sequence belongs to the universal ribosomal protein uS15 family. In terms of assembly, part of the 30S ribosomal subunit.

The protein localises to the plastid. It localises to the chloroplast. In Jasminum nudiflorum (Winter jasmine), this protein is Small ribosomal subunit protein uS15c (rps15).